The chain runs to 426 residues: Serine--tRNA ligase (426 aa).

L-serine is bound at residue Thr-233–Glu-235. Arg-264–Glu-266 provides a ligand contact to ATP. Glu-287 is a binding site for L-serine. Glu-351–Ser-354 contributes to the ATP binding site. Ser-387 provides a ligand contact to L-serine.

It belongs to the class-II aminoacyl-tRNA synthetase family. Type-1 seryl-tRNA synthetase subfamily. As to quaternary structure, homodimer. The tRNA molecule binds across the dimer.

Its subcellular location is the cytoplasm. The catalysed reaction is tRNA(Ser) + L-serine + ATP = L-seryl-tRNA(Ser) + AMP + diphosphate + H(+). It carries out the reaction tRNA(Sec) + L-serine + ATP = L-seryl-tRNA(Sec) + AMP + diphosphate + H(+). The protein operates within aminoacyl-tRNA biosynthesis; selenocysteinyl-tRNA(Sec) biosynthesis; L-seryl-tRNA(Sec) from L-serine and tRNA(Sec): step 1/1. Functionally, catalyzes the attachment of serine to tRNA(Ser). Is also able to aminoacylate tRNA(Sec) with serine, to form the misacylated tRNA L-seryl-tRNA(Sec), which will be further converted into selenocysteinyl-tRNA(Sec). The chain is Serine--tRNA ligase from Xylella fastidiosa (strain 9a5c).